The sequence spans 202 residues: Crossover junction endodeoxyribonuclease RuvC (202 aa).

Active-site residues include D7, E68, and D141. Mg(2+) is bound by residues D7, E68, and D141.

It belongs to the RuvC family. In terms of assembly, homodimer which binds Holliday junction (HJ) DNA. The HJ becomes 2-fold symmetrical on binding to RuvC with unstacked arms; it has a different conformation from HJ DNA in complex with RuvA. In the full resolvosome a probable DNA-RuvA(4)-RuvB(12)-RuvC(2) complex forms which resolves the HJ. Mg(2+) serves as cofactor.

The protein resides in the cytoplasm. The catalysed reaction is Endonucleolytic cleavage at a junction such as a reciprocal single-stranded crossover between two homologous DNA duplexes (Holliday junction).. Functionally, the RuvA-RuvB-RuvC complex processes Holliday junction (HJ) DNA during genetic recombination and DNA repair. Endonuclease that resolves HJ intermediates. Cleaves cruciform DNA by making single-stranded nicks across the HJ at symmetrical positions within the homologous arms, yielding a 5'-phosphate and a 3'-hydroxyl group; requires a central core of homology in the junction. The consensus cleavage sequence is 5'-(A/T)TT(C/G)-3'. Cleavage occurs on the 3'-side of the TT dinucleotide at the point of strand exchange. HJ branch migration catalyzed by RuvA-RuvB allows RuvC to scan DNA until it finds its consensus sequence, where it cleaves and resolves the cruciform DNA. The sequence is that of Crossover junction endodeoxyribonuclease RuvC from Clavibacter michiganensis subsp. michiganensis (strain NCPPB 382).